We begin with the raw amino-acid sequence, 208 residues long: Uracil phosphoribosyltransferase (208 aa).

Residues Arg78, Arg103, and 130-138 each bind 5-phospho-alpha-D-ribose 1-diphosphate; that span reads DPMLATGGT. Uracil is bound by residues Ile193 and 198-200; that span reads GDA. Residue Asp199 coordinates 5-phospho-alpha-D-ribose 1-diphosphate.

Belongs to the UPRTase family. It depends on Mg(2+) as a cofactor.

It carries out the reaction UMP + diphosphate = 5-phospho-alpha-D-ribose 1-diphosphate + uracil. It functions in the pathway pyrimidine metabolism; UMP biosynthesis via salvage pathway; UMP from uracil: step 1/1. Its activity is regulated as follows. Allosterically activated by GTP. Catalyzes the conversion of uracil and 5-phospho-alpha-D-ribose 1-diphosphate (PRPP) to UMP and diphosphate. This chain is Uracil phosphoribosyltransferase, found in Nitratidesulfovibrio vulgaris (strain ATCC 29579 / DSM 644 / CCUG 34227 / NCIMB 8303 / VKM B-1760 / Hildenborough) (Desulfovibrio vulgaris).